Consider the following 100-residue polypeptide: Nucleoid-associated protein RoseRS_1534 (100 aa).

The protein belongs to the YbaB/EbfC family. As to quaternary structure, homodimer.

The protein resides in the cytoplasm. The protein localises to the nucleoid. In terms of biological role, binds to DNA and alters its conformation. May be involved in regulation of gene expression, nucleoid organization and DNA protection. This Roseiflexus sp. (strain RS-1) protein is Nucleoid-associated protein RoseRS_1534.